Here is a 196-residue protein sequence, read N- to C-terminus: Transmembrane 4 L6 family member 5 (196 aa).

Residues 1–9 (MCTGKCARF) lie on the Cytoplasmic side of the membrane. A helical transmembrane segment spans residues 10 to 30 (VGLSLIPLSLVCIVANALLLV). At 31-45 (PNGQTTWTKDHLSLQ) the chain is on the extracellular side. A helical membrane pass occupies residues 46–66 (VWLMAGFVGGGLMVLCPGISA). Residues 67–89 (VRAGGKGCCGAGCCGNRCRMLRS) lie on the Cytoplasmic side of the membrane. A helical membrane pass occupies residues 90–110 (VFCSAIGLLGAIYCLSVSGTG). The segment at 90–196 (VFCSAIGLLG…DCRKKQGSSQ (107 aa)) is interaction with MTOR and CASTOR1. Topologically, residues 111 to 156 (LRIGPQCLMNGSWDYHFQDTAGSYLLNRTQWNLCVEPPDVVLWNVT) are extracellular. Residue N120 is glycosylated (N-linked (GlcNAc...) asparagine). An L-arginine-binding site is contributed by 123–128 (WDYHFQ). N-linked (GlcNAc...) asparagine glycans are attached at residues N137 and N154. A helical membrane pass occupies residues 157 to 177 (LFSLLVAASCLEILLCGVQLV). The Cytoplasmic segment spans residues 178-196 (NASIGVLCGDCRKKQGSSQ).

This sequence belongs to the L6 tetraspanin family. Interacts with MTOR; the interaction is positively regulated by arginine and is negatively regulated by leucine. Interacts with SLC38A9. Interacts with SLC7A1; the interaction is negatively regulated by arginine. Interacts with CASTOR1; the interaction is positively regulated by leucine and is negatively regulated by arginine.

The protein localises to the lysosome membrane. It is found in the cell membrane. Acts as a lysosomal membrane arginine sensor. Forms a complex with MTOR and SLC38A9 on lysosomal membranes in an arginine-regulated manner, leading to arginine efflux which enables the activation of mTORC1 which subsequently leads to RPS6KB1 and EIF4EBP1 phosphorylations. Facilitates cell cycle G1/S phase progression and the translocation of the CDK4-CCND1 complex into the nucleus. CDKN1B and RHOA/ROCK signaling activity are involved in TM4SF5-mediated acceleration of G1/S phase progression. This Bos taurus (Bovine) protein is Transmembrane 4 L6 family member 5 (TM4SF5).